Consider the following 245-residue polypeptide: 1-(5-phosphoribosyl)-5-[(5-phosphoribosylamino)methylideneamino] imidazole-4-carboxamide isomerase (245 aa).

The active-site Proton acceptor is Asp7. Asp129 (proton donor) is an active-site residue.

The protein belongs to the HisA/HisF family.

The protein localises to the cytoplasm. It carries out the reaction 1-(5-phospho-beta-D-ribosyl)-5-[(5-phospho-beta-D-ribosylamino)methylideneamino]imidazole-4-carboxamide = 5-[(5-phospho-1-deoxy-D-ribulos-1-ylimino)methylamino]-1-(5-phospho-beta-D-ribosyl)imidazole-4-carboxamide. Its pathway is amino-acid biosynthesis; L-histidine biosynthesis; L-histidine from 5-phospho-alpha-D-ribose 1-diphosphate: step 4/9. This Vibrio campbellii (strain ATCC BAA-1116) protein is 1-(5-phosphoribosyl)-5-[(5-phosphoribosylamino)methylideneamino] imidazole-4-carboxamide isomerase.